The following is a 632-amino-acid chain: tRNA uridine 5-carboxymethylaminomethyl modification enzyme MnmG (632 aa).

Residues 13 to 18 (GGGHAG), valine 125, and serine 180 contribute to the FAD site. 273–287 (GPRYCPSIEDKVMRF) contributes to the NAD(+) binding site. Glutamine 370 contacts FAD.

Belongs to the MnmG family. In terms of assembly, homodimer. Heterotetramer of two MnmE and two MnmG subunits. It depends on FAD as a cofactor.

The protein resides in the cytoplasm. Functionally, NAD-binding protein involved in the addition of a carboxymethylaminomethyl (cmnm) group at the wobble position (U34) of certain tRNAs, forming tRNA-cmnm(5)s(2)U34. The chain is tRNA uridine 5-carboxymethylaminomethyl modification enzyme MnmG from Vibrio vulnificus (strain CMCP6).